Here is a 323-residue protein sequence, read N- to C-terminus: Fructose-1,6-bisphosphatase class 1 (323 aa).

Mg(2+)-binding residues include Glu84, Asp103, Leu105, and Asp106. Substrate is bound by residues 106–109 (DGSS), Asn198, and Lys264. Glu270 serves as a coordination point for Mg(2+).

This sequence belongs to the FBPase class 1 family. Homotetramer. It depends on Mg(2+) as a cofactor.

The protein localises to the cytoplasm. It catalyses the reaction beta-D-fructose 1,6-bisphosphate + H2O = beta-D-fructose 6-phosphate + phosphate. It functions in the pathway carbohydrate biosynthesis; gluconeogenesis. This is Fructose-1,6-bisphosphatase class 1 from Hydrogenovibrio crunogenus (strain DSM 25203 / XCL-2) (Thiomicrospira crunogena).